Consider the following 554-residue polypeptide: Hydroxylamine reductase (554 aa).

[2Fe-2S] cluster is bound by residues C3, C6, C18, and C25. 8 residues coordinate hybrid [4Fe-2O-2S] cluster: H252, E276, C320, C408, C436, C461, E495, and K497. C408 bears the Cysteine persulfide mark.

This sequence belongs to the HCP family. [2Fe-2S] cluster serves as cofactor. Requires hybrid [4Fe-2O-2S] cluster as cofactor.

The protein resides in the cytoplasm. It carries out the reaction A + NH4(+) + H2O = hydroxylamine + AH2 + H(+). Functionally, catalyzes the reduction of hydroxylamine to form NH(3) and H(2)O. This Shewanella baltica (strain OS185) protein is Hydroxylamine reductase.